The following is a 398-amino-acid chain: Chalcone synthase 1 (398 aa).

58-65 (KFKRMCDK) serves as a coordination point for CoA. Cys167 functions as the Acyl-thioester intermediate in the catalytic mechanism. Substrate contacts are provided by residues Thr200 and 219-220 (GD). Ala311 contributes to the CoA binding site.

The protein belongs to the thiolase-like superfamily. Chalcone/stilbene synthases family. In terms of assembly, homodimer.

It carries out the reaction (E)-4-coumaroyl-CoA + 3 malonyl-CoA + 3 H(+) = 2',4,4',6'-tetrahydroxychalcone + 3 CO2 + 4 CoA. It participates in secondary metabolite biosynthesis; flavonoid biosynthesis. The primary product of this enzyme is 4,2',4',6'-tetrahydroxychalcone (also termed naringenin-chalcone or chalcone) which can under specific conditions spontaneously isomerize into naringenin. This is Chalcone synthase 1 (CHS1) from Oryza sativa subsp. indica (Rice).